A 648-amino-acid polypeptide reads, in one-letter code: Protein teflon (648 aa).

The C2H2-type 1 zinc-finger motif lies at 33–56; sequence LYCHFCRDLFTQLPEFLRHLQGAH. Disordered regions lie at residues 76–127 and 146–170; these read SGEQ…GSQN and EHIN…NSES. A compositionally biased stretch (polar residues) spans 85 to 94; the sequence is VGHNSSSSDS. The segment covering 96-107 has biased composition (basic and acidic residues); the sequence is GLAKSEDSRATE. A C2H2-type 2; degenerate zinc finger spans residues 598-620; it reads YFCKCCDDIFTLNEDYIRHLVSQ. The segment at 624 to 647 adopts a C2H2-type 3 zinc-finger fold; that stretch reads YQCTKCIKTFKYQGHYDKHMRTVH.

It belongs to the Teflon family.

It localises to the nucleus. It is found in the chromosome. In terms of biological role, specifically required in males for proper segregation of autosomal bivalents at meiosis I. Expression is required in the male germ line prior to spermatocyte stage S4. May have a role as a bridging molecule maintaining adhesion to hold autosome bivalents together via heterochromatic connections. In Drosophila yakuba (Fruit fly), this protein is Protein teflon.